The primary structure comprises 523 residues: Cytochrome b5 reductase 4 (523 aa).

One can recognise a Cytochrome b5 heme-binding domain in the interval 54–130 (LIDVTEEELA…LKECLIGRMA (77 aa)). His-89 and His-112 together coordinate heme. Residues 167–258 (ESHPWYDWFQ…KEPVSWKSLG (92 aa)) enclose the CS domain. The FAD-binding FR-type domain occupies 275–387 (LYYRKCRLAS…SNPQGTFSSF (113 aa)). FAD contacts are provided by residues 367 to 382 (ENLT…NPQG) and 394 to 426 (DVFL…KAKL).

It belongs to the flavoprotein pyridine nucleotide cytochrome reductase family. It depends on FAD as a cofactor.

Its subcellular location is the endoplasmic reticulum. It catalyses the reaction 2 Fe(III)-[cytochrome b5] + NADH = 2 Fe(II)-[cytochrome b5] + NAD(+) + H(+). In terms of biological role, NADH-cytochrome b5 reductase involved in endoplasmic reticulum stress response pathway. This Xenopus tropicalis (Western clawed frog) protein is Cytochrome b5 reductase 4 (cyb5r4).